The primary structure comprises 318 residues: Acyl-CoA dehydrogenase IpdE2 (318 aa).

Positions 210 and 277 each coordinate FAD.

This sequence belongs to the acyl-CoA dehydrogenase family. Heterotetramer composed of 2 IpdE1 subunits and 2 IpdE2 subunits. FAD serves as cofactor.

The enzyme catalyses 3-[(3aS,4S,5R,7aS)-5-hydroxy-7a-methyl-1-oxo-octahydro-1H-inden-4-yl]propanoyl-CoA + A = (2E)-3-[(3aS,4S,5R,7aS)-5-hydroxy-7a-methyl-1-oxo-octahydro-1H-inden-4-yl]prop-2-enoyl-CoA + AH2. Its pathway is steroid metabolism; cholesterol degradation. Involved in cholesterol degradation. Catalyzes the dehydrogenation of 5OH-HIP-CoA to 5OH-HIPE-CoA. Can also use octanoyl-CoA and dihydroferuloyl-CoA, with lower efficiency. Cannot use 3-oxo-4-pregnene-20-carboxyl-CoA (3-OPC-CoA). The sequence is that of Acyl-CoA dehydrogenase IpdE2 from Mycobacterium tuberculosis (strain ATCC 25618 / H37Rv).